The following is a 993-amino-acid chain: ATP-dependent DNA helicase MPH1 (993 aa).

The Helicase ATP-binding domain occupies 94 to 261 (IVHKSLFQNT…EVVNNLDISK (168 aa)). 107–114 (IPTGMGKT) lines the ATP pocket. Positions 209–212 (DEAH) match the DEAH box motif. Positions 507-655 (KVERLHRQEQ…CIDYKKSDRI (149 aa)) constitute a Helicase C-terminal domain. The segment at 530 to 551 (NDKLERSARRTGSSEEAQISGM) is disordered. Over residues 539–551 (RTGSSEEAQISGM) the composition is skewed to polar residues. Residues 751–810 (LVTSNENPSKKRKIFKALDNLENDSTEEASSSLETEDEEVSDDNNVFIAEGQNGCQKDLE) are FKH1-binding region. A phosphothreonine mark is found at T776 and T785.

Belongs to the DEAD box helicase family. DEAH subfamily. FANCM sub-subfamily. In terms of assembly, interacts with the MHF histone-fold complex composed of MHF1 and MHF2 to form the FANCM-MHF complex. Interacts with FHK1. Post-translationally, phosphorylation at both Thr-776 and Thr-785 is required for the interaction with FKH1.

It is found in the nucleus. It carries out the reaction ATP + H2O = ADP + phosphate + H(+). ATP-dependent DNA helicase involved in DNA damage repair by homologous recombination and in genome maintenance. Capable of unwinding D-loops. Plays a role in limiting crossover recombinants during mitotic DNA double-strand break (DSB) repair. Prevents crossovers between ectopic sequences by removing substrates for MUS81-MMS4 or RAD1-RAD10 cleavage. Component of a FANCM-MHF complex which promotes gene conversion at blocked replication forks, probably by reversal of the stalled fork. Binds to flap-structured DNA but not to non-flap nicked DNA, and participates in Okazaki fragment processing by stimulating the endonuclease activities of FEN1 and DNA2. Involved in recombination donor preference during mating-type switching via interaction with FKH1. This chain is ATP-dependent DNA helicase MPH1, found in Saccharomyces cerevisiae (strain ATCC 204508 / S288c) (Baker's yeast).